The sequence spans 210 residues: Proteasome subunit beta (210 aa).

Positions 1–9 (MDNDKYLKG) are cleaved as a propeptide — removed in mature form; by autocatalysis. Catalysis depends on T10, which acts as the Nucleophile.

The protein belongs to the peptidase T1B family. The 20S proteasome core is composed of 14 alpha and 14 beta subunits that assemble into four stacked heptameric rings, resulting in a barrel-shaped structure. The two inner rings, each composed of seven catalytic beta subunits, are sandwiched by two outer rings, each composed of seven alpha subunits. The catalytic chamber with the active sites is on the inside of the barrel. Has a gated structure, the ends of the cylinder being occluded by the N-termini of the alpha-subunits. Is capped at one or both ends by the proteasome regulatory ATPase, PAN.

The protein localises to the cytoplasm. The enzyme catalyses Cleavage of peptide bonds with very broad specificity.. With respect to regulation, the formation of the proteasomal ATPase PAN-20S proteasome complex, via the docking of the C-termini of PAN into the intersubunit pockets in the alpha-rings, triggers opening of the gate for substrate entry. Interconversion between the open-gate and close-gate conformations leads to a dynamic regulation of the 20S proteasome proteolysis activity. Component of the proteasome core, a large protease complex with broad specificity involved in protein degradation. The sequence is that of Proteasome subunit beta from Methanosarcina thermophila.